The following is a 568-amino-acid chain: Proline--tRNA ligase (568 aa).

Belongs to the class-II aminoacyl-tRNA synthetase family. ProS type 1 subfamily. In terms of assembly, homodimer.

Its subcellular location is the cytoplasm. The enzyme catalyses tRNA(Pro) + L-proline + ATP = L-prolyl-tRNA(Pro) + AMP + diphosphate. Catalyzes the attachment of proline to tRNA(Pro) in a two-step reaction: proline is first activated by ATP to form Pro-AMP and then transferred to the acceptor end of tRNA(Pro). As ProRS can inadvertently accommodate and process non-cognate amino acids such as alanine and cysteine, to avoid such errors it has two additional distinct editing activities against alanine. One activity is designated as 'pretransfer' editing and involves the tRNA(Pro)-independent hydrolysis of activated Ala-AMP. The other activity is designated 'posttransfer' editing and involves deacylation of mischarged Ala-tRNA(Pro). The misacylated Cys-tRNA(Pro) is not edited by ProRS. This chain is Proline--tRNA ligase, found in Alkalilimnicola ehrlichii (strain ATCC BAA-1101 / DSM 17681 / MLHE-1).